Here is a 550-residue protein sequence, read N- to C-terminus: Glucose-6-phosphate isomerase 1 (550 aa).

Glu353 (proton donor) is an active-site residue. Residues His384 and Lys512 contribute to the active site.

It belongs to the GPI family.

Its subcellular location is the cytoplasm. The enzyme catalyses alpha-D-glucose 6-phosphate = beta-D-fructose 6-phosphate. Its pathway is carbohydrate biosynthesis; gluconeogenesis. It functions in the pathway carbohydrate degradation; glycolysis; D-glyceraldehyde 3-phosphate and glycerone phosphate from D-glucose: step 2/4. Its function is as follows. Catalyzes the reversible isomerization of glucose-6-phosphate to fructose-6-phosphate. The protein is Glucose-6-phosphate isomerase 1 of Thiobacillus denitrificans (strain ATCC 25259 / T1).